Here is a 441-residue protein sequence, read N- to C-terminus: Probable dihydroorotase-like protein (441 aa).

Residues 121 to 140 form a disordered region; that stretch reads VNAHHQPPGDPQAENRPDSA.

Belongs to the metallo-dependent hydrolases superfamily. DHOase family. PyrC' subfamily.

In terms of biological role, non-functional DHOase. This chain is Probable dihydroorotase-like protein (pyrC'), found in Synechocystis sp. (strain ATCC 27184 / PCC 6803 / Kazusa).